Reading from the N-terminus, the 255-residue chain is Small ribosomal subunit protein eS1 (255 aa).

The segment covering Met-1–Lys-18 has biased composition (basic residues). The segment at Met-1–Val-20 is disordered. Ala-2 is modified (N-acetylalanine; partial).

Belongs to the eukaryotic ribosomal protein eS1 family. As to quaternary structure, component of the small ribosomal subunit. Mature ribosomes consist of a small (40S) and a large (60S) subunit. The 40S subunit contains about 33 different proteins and 1 molecule of RNA (18S). The 60S subunit contains about 49 different proteins and 3 molecules of RNA (25S, 5.8S and 5S).

The protein localises to the cytoplasm. The protein is Small ribosomal subunit protein eS1 of Coccidioides immitis (strain RS) (Valley fever fungus).